The chain runs to 88 residues: Small ribosomal subunit protein uS15 (88 aa).

Belongs to the universal ribosomal protein uS15 family. In terms of assembly, part of the 30S ribosomal subunit. Forms a bridge to the 50S subunit in the 70S ribosome, contacting the 23S rRNA.

Functionally, one of the primary rRNA binding proteins, it binds directly to 16S rRNA where it helps nucleate assembly of the platform of the 30S subunit by binding and bridging several RNA helices of the 16S rRNA. In terms of biological role, forms an intersubunit bridge (bridge B4) with the 23S rRNA of the 50S subunit in the ribosome. The polypeptide is Small ribosomal subunit protein uS15 (Borrelia hermsii (strain HS1 / DAH)).